Reading from the N-terminus, the 148-residue chain is UPF0756 membrane protein YeaL (148 aa).

Helical transmembrane passes span 14 to 34, 51 to 71, 86 to 106, and 121 to 141; these read ALGF…LIIV, LTVG…SGTL, LVAI…ITLM, and VLGV…AGLV.

Belongs to the UPF0756 family.

The protein localises to the cell membrane. This chain is UPF0756 membrane protein YeaL, found in Salmonella choleraesuis (strain SC-B67).